A 475-amino-acid chain; its full sequence is MSIRTPPRLLELAGRSLLRDEALAISTLEELPTELFPPLFMEAFSRRHCEALKLMVQAWPFLRLPLGSLMKRPCPETFQAVLDGLDALLTHRVRLRRWKLQVLDLQDVSENFWMVWSEAMARRCLPNAMMNRKPLQDCPRMRGQQPLTVFIDLCLKNRTLDEYFTCLFLWVKQREGLVHLCCKKLKMLGMLFHNIRNILKTVNLDCIQEVEVNCNWTLPVLAEFTPYLGQMRNLRKLVLSDIDSRYISPEQKKEFVTQFTTQFLKLRCLQKLYMNSVSFLEGHLDQMLSCLKTSLNILAITNCVLLESDLKHLSKYPSIGQLKTLDLSGTRLANFSLVPLQVLLEKVAATLEYLDLDDCGIVDSQVNAILPALSRCFELTTFSFRGNPISTATLENLLCHTIRLNNLCLELYPAPRESYDVRGIVCRSRFAQLGAELMGRVRALREPERILFCTDYCPQCGNRSLYDLEVDRCCC.

An LRR 1; degenerate repeat occupies 97 to 124; it reads RWKLQVLDLQDVSENFWMVWSEAMARRC. The stretch at 179-203 is one LRR 2; degenerate repeat; it reads HLCCKKLKMLGMLFHNIRNILKTVN. The stretch at 204–230 is one LRR 3; degenerate repeat; the sequence is LDCIQEVEVNCNWTLPVLAEFTPYLGQ. An LRR 4; degenerate repeat occupies 231–265; sequence MRNLRKLVLSDIDSRYISPEQKKEFVTQFTTQFLK. LRR repeat units follow at residues 266–291, 292–323, 324–342, 348–375, and 376–400; these read LRCLQKLYMNSVSFLEGHLDQMLSCL, KTSLNILAITNCVLLESDLKHLSKYPSIGQLK, TLDLSGTRLANFSLVPLQV, AATLEYLDLDDCGIVDSQVNAILPALSR, and CFELTTFSFRGNPISTATLENLLCH.

Belongs to the PRAME family.

The sequence is that of PRAME family member 20 from Homo sapiens (Human).